A 331-amino-acid chain; its full sequence is MKISVIGGGSWGTTLAQVLTDNGHETLIYDVNPEAVKKINNNIHPFFDNKITGIRATLDLKESIDYADYILLAVPTKFMRDSLRDINKLATRKLYFINVSKGIEPVTLKRVSEIVTDEITPELLGAYAVLTGPSHAEEVIERKLTVLTAASDVEWFRKSVQQLFSNQSYLRVYTSDDLIGCEVGGAIKNAIAIVSGMMTGYGLGENARAALITRGILEIVRVVVHYGGKKETAFGLTGIGDLIVTASSYNSRNFNAGLKIGQGTPVEQVLSESKMVVEGVRAIQAAKDLCVQTGIELPIIEITYEVIFNNMSVKEAIQNLLTRELKEEVIA.

NADPH-binding residues include Ser10, Trp11, and Lys101. Sn-glycerol 3-phosphate is bound by residues Lys101, Gly132, and Ser134. Ala136 contacts NADPH. Positions 188, 241, 251, 252, and 253 each coordinate sn-glycerol 3-phosphate. Residue Lys188 is the Proton acceptor of the active site. Arg252 contacts NADPH. NADPH contacts are provided by Val276 and Glu278.

It belongs to the NAD-dependent glycerol-3-phosphate dehydrogenase family.

It localises to the cytoplasm. It carries out the reaction sn-glycerol 3-phosphate + NAD(+) = dihydroxyacetone phosphate + NADH + H(+). The catalysed reaction is sn-glycerol 3-phosphate + NADP(+) = dihydroxyacetone phosphate + NADPH + H(+). It functions in the pathway membrane lipid metabolism; glycerophospholipid metabolism. Catalyzes the reduction of the glycolytic intermediate dihydroxyacetone phosphate (DHAP) to sn-glycerol 3-phosphate (G3P), the key precursor for phospholipid synthesis. The chain is Glycerol-3-phosphate dehydrogenase [NAD(P)+] from Acholeplasma laidlawii (strain PG-8A).